We begin with the raw amino-acid sequence, 699 residues long: SPX domain-containing membrane protein At4g22990 (699 aa).

Residues 2 to 145 (VAFGKKLKER…GYRFTNYYVK (144 aa)) form the SPX domain. 6 helical membrane-spanning segments follow: residues 249–269 (FMSL…TYII), 280–300 (LGAA…AQLF), 317–337 (LIFS…AFDF), 339–358 (SIAV…ARAV), 377–397 (AGFV…AGLL), and 413–433 (LPGW…AISF). A compositionally biased stretch (acidic residues) spans 475–490 (IEEQGEDECDGSEEAS). A disordered region spans residues 475–494 (IEEQGEDECDGSEEASEDSR). 5 helical membrane passes run 515–535 (LLIY…SSVI), 546–566 (SVAI…LVVG), 578–598 (ILLV…HVVV), 606–626 (VCSG…NLSL), and 671–691 (MLLN…IVAT).

This sequence belongs to the major facilitator superfamily.

The protein resides in the membrane. In Arabidopsis thaliana (Mouse-ear cress), this protein is SPX domain-containing membrane protein At4g22990.